The sequence spans 299 residues: Delta-9 desaturase-like 1 protein (299 aa).

Helical transmembrane passes span 31–51 (IDIA…LAPF) and 55–75 (WEAL…ITFS). A Histidine box-1 motif is present at residues 77–82 (HRNLTH). Residues 114-118 (HRFHH) carry the Histidine box-2 motif. The next 2 membrane-spanning stretches (helical) occupy residues 174 to 194 (IGLH…LPYL) and 198 to 218 (VGVG…ACHI). Residues 246-250 (HNNHH) carry the Histidine box-3 motif. Residues 262–282 (WYQVDLTWYLICFFQALGLAT) form a helical membrane-spanning segment.

The protein belongs to the fatty acid desaturase type 1 family. Fe cation serves as cofactor.

The protein resides in the endoplasmic reticulum membrane. It functions in the pathway lipid metabolism; polyunsaturated fatty acid biosynthesis. This is Delta-9 desaturase-like 1 protein from Arabidopsis thaliana (Mouse-ear cress).